Here is a 450-residue protein sequence, read N- to C-terminus: Glucose-6-phosphate isomerase (450 aa).

Glu291 functions as the Proton donor in the catalytic mechanism. Catalysis depends on residues His312 and Lys426.

The protein belongs to the GPI family.

It is found in the cytoplasm. It catalyses the reaction alpha-D-glucose 6-phosphate = beta-D-fructose 6-phosphate. It participates in carbohydrate biosynthesis; gluconeogenesis. The protein operates within carbohydrate degradation; glycolysis; D-glyceraldehyde 3-phosphate and glycerone phosphate from D-glucose: step 2/4. Its function is as follows. Catalyzes the reversible isomerization of glucose-6-phosphate to fructose-6-phosphate. The sequence is that of Glucose-6-phosphate isomerase from Clostridium novyi (strain NT).